The following is a 78-amino-acid chain: Large ribosomal subunit protein bL28 (78 aa).

This sequence belongs to the bacterial ribosomal protein bL28 family.

This Pseudomonas aeruginosa (strain LESB58) protein is Large ribosomal subunit protein bL28.